The following is a 471-amino-acid chain: Paraneoplastic antigen-like protein 8A (471 aa).

Disordered stretches follow at residues S188–A300 and A321–V471. A compositionally biased stretch (basic residues) spans H238–T247. Low complexity predominate over residues K256 to L269. Over residues K270–R287 the composition is skewed to basic and acidic residues.

It belongs to the PNMA family.

The chain is Paraneoplastic antigen-like protein 8A (PNMA8A) from Bos taurus (Bovine).